The following is a 689-amino-acid chain: MIDRYTHQQLRIGLVSPQQISTWSKKILPNGEIVGEVTKPYTFHYKTNKPEKDGLFCERIFGPIKSGICACGNYRVIGDEKEDPQFCEQCGVEFVDSRIRRYQMGYIKLAYPVMHVWYLKRLPSYIVNLLDKPLNELEDLVYCGFYFARPIDKKPTFLRLRGLLEYEIQPWKYRIPIFFTTRSFDTFRNREMSTGGGSIRQQLANLDLRMIIDYSLVEWKELEEEESTGNEWEDRKVGRRKDFLLRRMELAKHFIRTNIEPKWMVLRLLPVLPPELRPIYHIDEDKLVTSDINEIYRRIIYRNNTLTDLLTTSIATPEELIISQEKLLQEAVDALLDNGICGQPMRDDHNRIYKSLSDVIEGKEGRVRETLLGKRVDYSGRSVIVVGPSLSLHRCGLPREIAIELFQAFVIRDLIRKHLASNIGVAKSQIRKKKPIVWEILQEILDDHPVLLNRAPTLHRLGIQAFLPVLVEGRAICLHPLVCKGFNADFDGDQMAVHVPLSLEAQAEARLLMFSHMNLLSPTIGDPISAPTQDMLSGLYVLTSGNRRGICVNRYNPCNRRNYQNEDNNYKYTKKKEPFFCNAYDAIGAYRQKRINLGSPLWLRWRLDQRVIAAREAPIEIHYESLGTYYEIYGHYLIVRSIKKEILYIYIRTTLGHISLYREIEEAIQGFWQGCYNSMLPARIRVSPG.

4 residues coordinate Zn(2+): cysteine 69, cysteine 71, cysteine 87, and cysteine 90. Mg(2+)-binding residues include aspartate 489, aspartate 491, and aspartate 493.

It belongs to the RNA polymerase beta' chain family. RpoC1 subfamily. In plastids the minimal PEP RNA polymerase catalytic core is composed of four subunits: alpha, beta, beta', and beta''. When a (nuclear-encoded) sigma factor is associated with the core the holoenzyme is formed, which can initiate transcription. The cofactor is Mg(2+). Requires Zn(2+) as cofactor.

The protein localises to the plastid. The protein resides in the chloroplast. It carries out the reaction RNA(n) + a ribonucleoside 5'-triphosphate = RNA(n+1) + diphosphate. In terms of biological role, DNA-dependent RNA polymerase catalyzes the transcription of DNA into RNA using the four ribonucleoside triphosphates as substrates. The chain is DNA-directed RNA polymerase subunit beta' from Helianthus annuus (Common sunflower).